A 628-amino-acid polypeptide reads, in one-letter code: UvrABC system protein C (628 aa).

Residues 21-100 (TGPGIYQFKN…IKELKPRYNV (80 aa)) form the GIY-YIG domain. The 36-residue stretch at 214 to 249 (AGLLKELHEKMLTAAAELRFEEAAELKMQLQSLRRY) folds into the UVR domain.

Belongs to the UvrC family. As to quaternary structure, interacts with UvrB in an incision complex.

Its subcellular location is the cytoplasm. Its function is as follows. The UvrABC repair system catalyzes the recognition and processing of DNA lesions. UvrC both incises the 5' and 3' sides of the lesion. The N-terminal half is responsible for the 3' incision and the C-terminal half is responsible for the 5' incision. This is UvrABC system protein C from Chlorobium luteolum (strain DSM 273 / BCRC 81028 / 2530) (Pelodictyon luteolum).